The primary structure comprises 207 residues: MDLNIKSLAGAEAGVVGVAEGVFAADYNESLIHQVVVAYMAGARQGTKAQKTRSEVSGGGAKPWRQKGTGRARAGTIRSPIFRKGGVTFAAKPKSYKQKVNRKMYSGAVKSILSELVRSDRMTVVESLRLETPKTKEFKVIVDSLGVKDVLFVVGVEEFNENLYLSSRNLKNVAVCDSVEINPVSLVCFENVVFTKQAIKEIEEKLV.

The segment at 48 to 70 (KAQKTRSEVSGGGAKPWRQKGTG) is disordered.

The protein belongs to the universal ribosomal protein uL4 family. Part of the 50S ribosomal subunit.

Its function is as follows. One of the primary rRNA binding proteins, this protein initially binds near the 5'-end of the 23S rRNA. It is important during the early stages of 50S assembly. It makes multiple contacts with different domains of the 23S rRNA in the assembled 50S subunit and ribosome. Forms part of the polypeptide exit tunnel. This chain is Large ribosomal subunit protein uL4, found in Francisella philomiragia subsp. philomiragia (strain ATCC 25017 / CCUG 19701 / FSC 153 / O#319-036).